Here is a 389-residue protein sequence, read N- to C-terminus: Dihydroorotase (389 aa).

Zn(2+)-binding residues include H51 and H53. Residues 53–55 (HVR) and N85 each bind substrate. Positions 133, 158, 192, and 254 each coordinate Zn(2+). K133 is modified (N6-carboxylysine). D254 is an active-site residue. Residues H258 and 272–273 (PG) contribute to the substrate site.

It belongs to the metallo-dependent hydrolases superfamily. DHOase family. Class I DHOase subfamily. Requires Zn(2+) as cofactor.

The catalysed reaction is (S)-dihydroorotate + H2O = N-carbamoyl-L-aspartate + H(+). The protein operates within pyrimidine metabolism; UMP biosynthesis via de novo pathway; (S)-dihydroorotate from bicarbonate: step 3/3. Catalyzes the reversible cyclization of carbamoyl aspartate to dihydroorotate. This Sulfurisphaera tokodaii (strain DSM 16993 / JCM 10545 / NBRC 100140 / 7) (Sulfolobus tokodaii) protein is Dihydroorotase.